The chain runs to 436 residues: Trigger factor (436 aa).

The PPIase FKBP-type domain occupies 163–248 (GDTVVIDFDG…IHEVKEKQLP (86 aa)).

It belongs to the FKBP-type PPIase family. Tig subfamily.

The protein localises to the cytoplasm. The catalysed reaction is [protein]-peptidylproline (omega=180) = [protein]-peptidylproline (omega=0). Functionally, involved in protein export. Acts as a chaperone by maintaining the newly synthesized protein in an open conformation. Functions as a peptidyl-prolyl cis-trans isomerase. This Levilactobacillus brevis (strain ATCC 367 / BCRC 12310 / CIP 105137 / JCM 1170 / LMG 11437 / NCIMB 947 / NCTC 947) (Lactobacillus brevis) protein is Trigger factor.